We begin with the raw amino-acid sequence, 175 residues long: Ribosome maturation factor RimM (175 aa).

The PRC barrel domain maps to 98–175 (EGEYYWHQLE…EMRVDWDADF (78 aa)).

Belongs to the RimM family. As to quaternary structure, binds ribosomal protein uS19.

It localises to the cytoplasm. Its function is as follows. An accessory protein needed during the final step in the assembly of 30S ribosomal subunit, possibly for assembly of the head region. Essential for efficient processing of 16S rRNA. May be needed both before and after RbfA during the maturation of 16S rRNA. It has affinity for free ribosomal 30S subunits but not for 70S ribosomes. This is Ribosome maturation factor RimM from Pseudomonas aeruginosa (strain ATCC 15692 / DSM 22644 / CIP 104116 / JCM 14847 / LMG 12228 / 1C / PRS 101 / PAO1).